Here is a 330-residue protein sequence, read N- to C-terminus: DNA-directed RNA polymerase I subunit RPA43 (330 aa).

A disordered region spans residues 251–330 (ADVTDVTPQE…ANFESPKKRQ (80 aa)). Phosphoserine occurs at positions 306, 318, and 325. The segment covering 317–330 (HSEEANFESPKKRQ) has biased composition (basic and acidic residues).

It belongs to the eukaryotic RPA43 RNA polymerase subunit family. As to quaternary structure, component of the RNA polymerase I (Pol I) complex consisting of 13 subunits: a ten-subunit catalytic core composed of POLR1A/RPA1, POLR1B/RPA2, POLR1C/RPAC1, POLR1D/RPAC2, POLR1H/RPA12, POLR2E/RPABC1, POLR2F/RPABC2, POLR2H/RPABC3, POLR2K/RPABC4 and POLR2L/RPABC5; a mobile stalk subunit POLR1F/RPA43 protruding from the core and additional subunits homologous to general transcription factors POLR1E/RPA49 and POLR1G/RPA34. Interacts with RRN3/TIF-IA. Interacts with RRN3/TIF-IA. In terms of tissue distribution, widely expressed.

It is found in the nucleus. The protein resides in the nucleolus. Functionally, component of RNA polymerase I (Pol I), a DNA-dependent RNA polymerase which synthesizes ribosomal RNA precursors using the four ribonucleoside triphosphates as substrates. Through its association with RRN3/TIF-IA may be involved in recruitment of Pol I to rDNA promoters. The protein is DNA-directed RNA polymerase I subunit RPA43 of Mus musculus (Mouse).